Consider the following 638-residue polypeptide: Dihydrolipoyllysine-residue acetyltransferase component of pyruvate dehydrogenase complex (638 aa).

Lipoyl-binding domains follow at residues 2-74 and 117-191; these read SEII…IELE and SQEV…LTLR. Residue Lys-40 is modified to N6-lipoyllysine. The span at 90–117 shows a compositional bias: low complexity; sequence PAAPTQAVDEAEAPSPGASATPAPAAAS. Residues 90 to 119 form a disordered region; the sequence is PAAPTQAVDEAEAPSPGASATPAPAAASQE. Position 157 is an N6-lipoyllysine (Lys-157). The tract at residues 201-220 is disordered; it reads APAAAAAASPAPAPLAPAAA. Positions 222–296 constitute a Lipoyl-binding 3 domain; the sequence is PQEVKVPDIG…GTGDQILTLR (75 aa). At Lys-262 the chain carries N6-lipoyllysine. A compositionally biased stretch (low complexity) spans 301–320; the sequence is APSGPRARGSPGQAAAAPGA. The disordered stretch occupies residues 301–336; it reads APSGPRARGSPGQAAAAPGAAPAPAPVGAPSRNGAK. Residues 338 to 375 enclose the Peripheral subunit-binding (PSBD) domain; the sequence is HAGPAVRQLAREFGVELAAINSTGPRGRILKEDVQAYV. A catalytic region spans residues 382–638; that stretch reads AKEAPAAGAA…LLADIRAILL (257 aa). Residue His-611 is part of the active site.

It belongs to the 2-oxoacid dehydrogenase family. As to quaternary structure, forms a 24-polypeptide structural core with octahedral symmetry. The cofactor is (R)-lipoate.

It catalyses the reaction N(6)-[(R)-dihydrolipoyl]-L-lysyl-[protein] + acetyl-CoA = N(6)-[(R)-S(8)-acetyldihydrolipoyl]-L-lysyl-[protein] + CoA. Its function is as follows. The pyruvate dehydrogenase complex catalyzes the overall conversion of pyruvate to acetyl-CoA and CO(2). It contains multiple copies of three enzymatic components: pyruvate dehydrogenase (E1), dihydrolipoamide acetyltransferase (E2) and lipoamide dehydrogenase (E3). The polypeptide is Dihydrolipoyllysine-residue acetyltransferase component of pyruvate dehydrogenase complex (Azotobacter vinelandii).